Here is an 890-residue protein sequence, read N- to C-terminus: Agglutinin-like protein ARB_02240 (890 aa).

The signal sequence occupies residues 1–20; sequence MRLTTSVLLWAATSVLQADA. N-linked (GlcNAc...) asparagine glycosylation is found at N106, N217, N583, and N654. Positions 680–872 are disordered; that stretch reads IPSGPTTRPE…GGAGSLSPST (193 aa). 2 stretches are compositionally biased toward low complexity: residues 693 to 753 and 760 to 790; these read TSST…TDSS and TTST…HSST. A compositionally biased stretch (polar residues) spans 791 to 802; that stretch reads GSDPESTNTRHP. Composition is skewed to low complexity over residues 803 to 812 and 821 to 837; these read SSTASGSTTT and SSSS…TATT. Over residues 838-848 the composition is skewed to gly residues; that stretch reads TGGGSIPGSGT. G864 carries GPI-anchor amidated glycine lipidation. A propeptide spans 865–890 (removed in mature form); sequence AGSLSPSTWGKVVTCISSMALLVAFI.

Belongs to the ALS family. Post-translationally, the GPI-anchor is attached to the protein in the endoplasmic reticulum and serves to target the protein to the cell surface. There, the glucosamine-inositol phospholipid moiety is cleaved off and the GPI-modified mannoprotein is covalently attached via its lipidless GPI glycan remnant to the 1,6-beta-glucan of the outer cell wall layer.

It is found in the secreted. It localises to the cell membrane. Its subcellular location is the cell wall. In terms of biological role, cell surface adhesion protein which mediates cell agglutination and host tissue adherence. The polypeptide is Agglutinin-like protein ARB_02240 (Arthroderma benhamiae (strain ATCC MYA-4681 / CBS 112371) (Trichophyton mentagrophytes)).